A 236-amino-acid chain; its full sequence is Orotidine 5'-phosphate decarboxylase (236 aa).

Residues Asp-16, Lys-38, Asp-65–Thr-74, Thr-123, Arg-184, Gln-193, Gly-213, and Arg-214 contribute to the substrate site. The active-site Proton donor is the Lys-67.

The protein belongs to the OMP decarboxylase family. Type 1 subfamily. As to quaternary structure, homodimer.

The catalysed reaction is orotidine 5'-phosphate + H(+) = UMP + CO2. It functions in the pathway pyrimidine metabolism; UMP biosynthesis via de novo pathway; UMP from orotate: step 2/2. In terms of biological role, catalyzes the decarboxylation of orotidine 5'-monophosphate (OMP) to uridine 5'-monophosphate (UMP). The chain is Orotidine 5'-phosphate decarboxylase from Methylobacterium nodulans (strain LMG 21967 / CNCM I-2342 / ORS 2060).